The primary structure comprises 417 residues: Argininosuccinate synthase (417 aa).

9–17 lines the ATP pocket; sequence AYSGGLDTS. Tyrosine 87 provides a ligand contact to L-citrulline. Glycine 117 is a binding site for ATP. L-aspartate-binding residues include threonine 119, asparagine 123, and aspartate 124. Asparagine 123 is a binding site for L-citrulline. Residues arginine 127, serine 175, serine 184, glutamate 260, and tyrosine 272 each contribute to the L-citrulline site.

Belongs to the argininosuccinate synthase family. Type 1 subfamily. Homotetramer.

The protein localises to the cytoplasm. It catalyses the reaction L-citrulline + L-aspartate + ATP = 2-(N(omega)-L-arginino)succinate + AMP + diphosphate + H(+). Its pathway is amino-acid biosynthesis; L-arginine biosynthesis; L-arginine from L-ornithine and carbamoyl phosphate: step 2/3. This is Argininosuccinate synthase from Oceanobacillus iheyensis (strain DSM 14371 / CIP 107618 / JCM 11309 / KCTC 3954 / HTE831).